A 229-amino-acid chain; its full sequence is Uracil-DNA glycosylase (229 aa).

The active-site Proton acceptor is the Asp65.

Belongs to the uracil-DNA glycosylase (UDG) superfamily. UNG family.

The protein localises to the cytoplasm. The catalysed reaction is Hydrolyzes single-stranded DNA or mismatched double-stranded DNA and polynucleotides, releasing free uracil.. Its function is as follows. Excises uracil residues from the DNA which can arise as a result of misincorporation of dUMP residues by DNA polymerase or due to deamination of cytosine. This Brevibacillus brevis (strain 47 / JCM 6285 / NBRC 100599) protein is Uracil-DNA glycosylase.